Reading from the N-terminus, the 349-residue chain is MSNLFFVILLAVGFGVWKVLDYFQLPNTFSILLLILTALSGVLWCYHRFVVLPKRHRQVARAEQRSGKTLSEEEKAKIEPISEASEFLSSLFPVLAVVFLVRSFLFEPFQIPSGSMESTLRVGDFLVVNKYAYGVKDPIFQNTIIAGEKPQRGDVIVFKAPQQALIRTGLGATRAAFAENLALSSKDNMSGVDYIKRIVGKGGDRVIFDVEQKTLKVVYGKEGKPCEIDCETKAFEYTQNPTNPAFPNELELTEKGDVTHNVLISEYRRYSDLEFFPQEGMQTAEWLVPEGQYFVMGDHRDHSDDSRFWGFVPEKNIVGKATYIWMSLEKEANEWPTGFRFERFFTAIK.

2 helical membrane passes run 3–23 (NLFF…LDYF) and 25–45 (LPNT…VLWC). Residues 46–80 (YHRFVVLPKRHRQVARAEQRSGKTLSEEEKAKIEP) lie on the Cytoplasmic side of the membrane. The chain crosses the membrane as a helical span at residues 81–101 (ISEASEFLSSLFPVLAVVFLV). Residues 102 to 349 (RSFLFEPFQI…RFERFFTAIK (248 aa)) lie on the Periplasmic side of the membrane. Residues S115 and K196 contribute to the active site.

It belongs to the peptidase S26 family.

It localises to the cell inner membrane. It catalyses the reaction Cleavage of hydrophobic, N-terminal signal or leader sequences from secreted and periplasmic proteins.. The sequence is that of Signal peptidase I (lepB) from Haemophilus influenzae (strain ATCC 51907 / DSM 11121 / KW20 / Rd).